Here is a 160-residue protein sequence, read N- to C-terminus: Serine-protein kinase RsbW (160 aa).

Belongs to the anti-sigma-factor family.

The catalysed reaction is L-seryl-[protein] + ATP = O-phospho-L-seryl-[protein] + ADP + H(+). The enzyme catalyses L-threonyl-[protein] + ATP = O-phospho-L-threonyl-[protein] + ADP + H(+). In terms of biological role, negative regulator of sigma-B activity. Phosphorylates and inactivates its specific antagonist protein, RsbV. Upon phosphorylation of RsbV, RsbW is released and binds to sigma-B, thereby blocking its ability to form an RNA polymerase holoenzyme (E-sigma-B). The chain is Serine-protein kinase RsbW from Bacillus cereus (strain ZK / E33L).